The chain runs to 659 residues: MRNCKELKHEKNGNVTEKIGKNKGKSKKVSKDESLLSFDLFLEGKEHSAYKFMGAHFVTENRKRGVRFTTWAPRSSKIYVIGDFNNWELKEEYSMKKINERGIWSLFLPKLEEGIKYKFAVVNECGNNTVYKADPYAFKSELRPNTASVLTKIKSFRWGDKRWLNKREKEGLDNKPMNIYELHLGSWKRKDGEFMTYEEISEVLVEYVKEMGYTHVEFMPINEHPLDASWGYQGVGYYSVTSRYGDLNGLKALINKLHKNNIGVLLDWVPSHFCKDEHGLFMFDGSPTYEYGAWWKANNEGWGTCNFDLGRPEVKSFLFSNAMYWINEFHIDGLRVDAVSNMLYLDYGREYGEWEPNIYGGNGNLEAIAFLKELNTIIKKEGKGAITVAEESTSWEGITKPVEEDGLGFDYKWNMGWMNDTLSYIELDPIYRKYHHNKMNFSMMYNYSEKFILPISHDEVVHGKKSLINKMWGDDWKKYAGLRLYASFMMGHPGKKLMFMGCEFGQFVEWREWEELQWNIIEEFDIHKKTQEYFKALNHFYLENSSLWSLDYEEEGFKWIDADNSEESVLSFIRIGKNKKEKLIFICNFTPEVYYDFKVGVPELGEYVEVFNSDSLEFGGAGNIMGDSILKATEESFKDFDYSIIVKVPPLGTLVLKVK.

A compositionally biased stretch (basic and acidic residues) spans methionine 1–asparagine 12. The interval methionine 1–lysine 25 is disordered. The active-site Nucleophile is aspartate 337. Glutamate 390 (proton donor) is an active-site residue.

The protein belongs to the glycosyl hydrolase 13 family. GlgB subfamily. As to quaternary structure, monomer.

The enzyme catalyses Transfers a segment of a (1-&gt;4)-alpha-D-glucan chain to a primary hydroxy group in a similar glucan chain.. It functions in the pathway glycan biosynthesis; glycogen biosynthesis. Catalyzes the formation of the alpha-1,6-glucosidic linkages in glycogen by scission of a 1,4-alpha-linked oligosaccharide from growing alpha-1,4-glucan chains and the subsequent attachment of the oligosaccharide to the alpha-1,6 position. The polypeptide is 1,4-alpha-glucan branching enzyme GlgB (Clostridium perfringens (strain ATCC 13124 / DSM 756 / JCM 1290 / NCIMB 6125 / NCTC 8237 / Type A)).